The sequence spans 117 residues: Prefoldin subunit beta (117 aa).

This sequence belongs to the prefoldin subunit beta family. Heterohexamer of two alpha and four beta subunits.

The protein localises to the cytoplasm. Molecular chaperone capable of stabilizing a range of proteins. Seems to fulfill an ATP-independent, HSP70-like function in archaeal de novo protein folding. This chain is Prefoldin subunit beta (pfdB), found in Methanosarcina acetivorans (strain ATCC 35395 / DSM 2834 / JCM 12185 / C2A).